A 183-amino-acid polypeptide reads, in one-letter code: NADH-ubiquinone oxidoreductase chain 5 (183 aa).

The next 4 membrane-spanning stretches (helical) occupy residues 7–27 (FMCYLSILTFFMPMLVTGDNS), 30–50 (LFLGWEGVGLASYLLIHFWFT), 111–131 (AITLICILLLIGAVGKSAQIG), and 144–164 (TPVSALIHAATMVTAGVFMIA).

It belongs to the complex I subunit 5 family.

The protein localises to the mitochondrion inner membrane. The catalysed reaction is a ubiquinone + NADH + 5 H(+)(in) = a ubiquinol + NAD(+) + 4 H(+)(out). In terms of biological role, core subunit of the mitochondrial membrane respiratory chain NADH dehydrogenase (Complex I) that is believed to belong to the minimal assembly required for catalysis. Complex I functions in the transfer of electrons from NADH to the respiratory chain. The immediate electron acceptor for the enzyme is believed to be ubiquinone. The polypeptide is NADH-ubiquinone oxidoreductase chain 5 (NDH5) (Pisum sativum (Garden pea)).